A 490-amino-acid chain; its full sequence is Aspartyl/glutamyl-tRNA(Asn/Gln) amidotransferase subunit B (490 aa).

Belongs to the GatB/GatE family. GatB subfamily. As to quaternary structure, heterotrimer of A, B and C subunits.

It catalyses the reaction L-glutamyl-tRNA(Gln) + L-glutamine + ATP + H2O = L-glutaminyl-tRNA(Gln) + L-glutamate + ADP + phosphate + H(+). It carries out the reaction L-aspartyl-tRNA(Asn) + L-glutamine + ATP + H2O = L-asparaginyl-tRNA(Asn) + L-glutamate + ADP + phosphate + 2 H(+). In terms of biological role, allows the formation of correctly charged Asn-tRNA(Asn) or Gln-tRNA(Gln) through the transamidation of misacylated Asp-tRNA(Asn) or Glu-tRNA(Gln) in organisms which lack either or both of asparaginyl-tRNA or glutaminyl-tRNA synthetases. The reaction takes place in the presence of glutamine and ATP through an activated phospho-Asp-tRNA(Asn) or phospho-Glu-tRNA(Gln). This is Aspartyl/glutamyl-tRNA(Asn/Gln) amidotransferase subunit B from Methylorubrum extorquens (strain PA1) (Methylobacterium extorquens).